A 366-amino-acid chain; its full sequence is tRNA 2-selenouridine synthase (366 aa).

A Rhodanese domain is found at 12–136 (FLSGTPMMDV…MRGFLIDVIE (125 aa)). Cys95 acts as the S-selanylcysteine intermediate in catalysis.

It belongs to the SelU family. Monomer.

It catalyses the reaction 5-methylaminomethyl-2-thiouridine(34) in tRNA + selenophosphate + (2E)-geranyl diphosphate + H2O + H(+) = 5-methylaminomethyl-2-selenouridine(34) in tRNA + (2E)-thiogeraniol + phosphate + diphosphate. The enzyme catalyses 5-methylaminomethyl-2-thiouridine(34) in tRNA + (2E)-geranyl diphosphate = 5-methylaminomethyl-S-(2E)-geranyl-thiouridine(34) in tRNA + diphosphate. The catalysed reaction is 5-methylaminomethyl-S-(2E)-geranyl-thiouridine(34) in tRNA + selenophosphate + H(+) = 5-methylaminomethyl-2-(Se-phospho)selenouridine(34) in tRNA + (2E)-thiogeraniol. It carries out the reaction 5-methylaminomethyl-2-(Se-phospho)selenouridine(34) in tRNA + H2O = 5-methylaminomethyl-2-selenouridine(34) in tRNA + phosphate. Functionally, involved in the post-transcriptional modification of the uridine at the wobble position (U34) of tRNA(Lys), tRNA(Glu) and tRNA(Gln). Catalyzes the conversion of 2-thiouridine (S2U-RNA) to 2-selenouridine (Se2U-RNA). Acts in a two-step process involving geranylation of 2-thiouridine (S2U) to S-geranyl-2-thiouridine (geS2U) and subsequent selenation of the latter derivative to 2-selenouridine (Se2U) in the tRNA chain. This is tRNA 2-selenouridine synthase from Cupriavidus pinatubonensis (strain JMP 134 / LMG 1197) (Cupriavidus necator (strain JMP 134)).